A 576-amino-acid polypeptide reads, in one-letter code: V-type ATP synthase alpha chain (576 aa).

238–245 contacts ATP; sequence GPFGAGKT.

This sequence belongs to the ATPase alpha/beta chains family.

The enzyme catalyses ATP + H2O + 4 H(+)(in) = ADP + phosphate + 5 H(+)(out). Produces ATP from ADP in the presence of a proton gradient across the membrane. The V-type alpha chain is a catalytic subunit. The chain is V-type ATP synthase alpha chain from Borrelia recurrentis (strain A1).